The chain runs to 244 residues: Protein crossbronx (244 aa).

Residues glutamine 20–glutamate 176 form the UBC core domain. The interval alanine 209–glutamate 244 is disordered.

It belongs to the ubiquitin-conjugating enzyme family. FTS subfamily.

The protein is Protein crossbronx (cbx) of Drosophila erecta (Fruit fly).